The sequence spans 274 residues: NH(3)-dependent NAD(+) synthetase (274 aa).

46–53 (GISGGQDS) lines the ATP pocket. Asp52 is a Mg(2+) binding site. Position 140 (Arg140) interacts with deamido-NAD(+). Residue Thr160 participates in ATP binding. Residue Glu165 coordinates Mg(2+). Residues Lys173 and Asp180 each coordinate deamido-NAD(+). ATP-binding residues include Lys189 and Thr211. 260-261 (HK) serves as a coordination point for deamido-NAD(+).

It belongs to the NAD synthetase family. As to quaternary structure, homodimer.

The catalysed reaction is deamido-NAD(+) + NH4(+) + ATP = AMP + diphosphate + NAD(+) + H(+). It participates in cofactor biosynthesis; NAD(+) biosynthesis; NAD(+) from deamido-NAD(+) (ammonia route): step 1/1. Catalyzes the ATP-dependent amidation of deamido-NAD to form NAD. Uses ammonia as a nitrogen source. This is NH(3)-dependent NAD(+) synthetase from Pectobacterium atrosepticum (strain SCRI 1043 / ATCC BAA-672) (Erwinia carotovora subsp. atroseptica).